The following is a 223-amino-acid chain: Sigma non-opioid intracellular receptor 1 (223 aa).

At methionine 1–tryptophan 9 the chain is on the lumenal side. A targeting to endoplasmic reticulum-associated lipid droplets region spans residues glutamine 2 to arginine 8. Residues valine 10 to leucine 30 traverse the membrane as a helical segment. Topologically, residues glycine 31–serine 223 are cytoplasmic. Residues serine 99–leucine 106 form an important for ligand-binding region. The C-terminal hydrophobic region stretch occupies residues valine 177–serine 223.

The protein belongs to the ERG2 family. Homotrimer. Forms a ternary complex with ANK2 and ITPR3. The complex is disrupted by agonists. Interacts with KCNA4. Interacts with KCNA2; cocaine consumption leads to increased interaction. Interacts with RNF112 in an oxidative stress-regulated manner.

The protein resides in the nucleus inner membrane. The protein localises to the nucleus outer membrane. It is found in the nucleus envelope. Its subcellular location is the cytoplasmic vesicle. It localises to the endoplasmic reticulum membrane. The protein resides in the membrane. The protein localises to the lipid droplet. It is found in the cell junction. Its subcellular location is the cell membrane. It localises to the cell projection. The protein resides in the growth cone. The protein localises to the postsynaptic density membrane. In terms of biological role, functions in lipid transport from the endoplasmic reticulum and is involved in a wide array of cellular functions probably through regulation of the biogenesis of lipid microdomains at the plasma membrane. Involved in the regulation of different receptors it plays a role in BDNF signaling and EGF signaling. Also regulates ion channels like the potassium channel and could modulate neurotransmitter release. Plays a role in calcium signaling through modulation together with ANK2 of the ITP3R-dependent calcium efflux at the endoplasmic reticulum. Plays a role in several other cell functions including proliferation, survival and death. Originally identified for its ability to bind various psychoactive drugs it is involved in learning processes, memory and mood alteration. Necessary for proper mitochondrial axonal transport in motor neurons, in particular the retrograde movement of mitochondria. Plays a role in protecting cells against oxidative stress-induced cell death via its interaction with RNF112. This chain is Sigma non-opioid intracellular receptor 1 (SIGMAR1), found in Mustela erminea (Ermine).